Here is a 261-residue protein sequence, read N- to C-terminus: Tryptophan synthase alpha chain (261 aa).

Active-site proton acceptor residues include glutamate 49 and aspartate 60.

The protein belongs to the TrpA family. In terms of assembly, tetramer of two alpha and two beta chains.

The catalysed reaction is (1S,2R)-1-C-(indol-3-yl)glycerol 3-phosphate + L-serine = D-glyceraldehyde 3-phosphate + L-tryptophan + H2O. The protein operates within amino-acid biosynthesis; L-tryptophan biosynthesis; L-tryptophan from chorismate: step 5/5. Its function is as follows. The alpha subunit is responsible for the aldol cleavage of indoleglycerol phosphate to indole and glyceraldehyde 3-phosphate. This Roseiflexus sp. (strain RS-1) protein is Tryptophan synthase alpha chain.